The chain runs to 814 residues: Valine--tRNA ligase (814 aa).

The short motif at 46 to 56 (PTVSGQLHIGH) is the 'HIGH' region element. Positions 536-540 (KMSKS) match the 'KMSKS' region motif. Position 539 (Lys-539) interacts with ATP.

The protein belongs to the class-I aminoacyl-tRNA synthetase family. ValS type 2 subfamily. Monomer.

Its subcellular location is the cytoplasm. It carries out the reaction tRNA(Val) + L-valine + ATP = L-valyl-tRNA(Val) + AMP + diphosphate. Functionally, catalyzes the attachment of valine to tRNA(Val). As ValRS can inadvertently accommodate and process structurally similar amino acids such as threonine, to avoid such errors, it has a 'posttransfer' editing activity that hydrolyzes mischarged Thr-tRNA(Val) in a tRNA-dependent manner. This Rickettsia prowazekii (strain Madrid E) protein is Valine--tRNA ligase.